Consider the following 239-residue polypeptide: tRNA (guanine-N(1)-)-methyltransferase (239 aa).

S-adenosyl-L-methionine-binding positions include G110 and L129–L134.

Belongs to the RNA methyltransferase TrmD family. Homodimer.

The protein localises to the cytoplasm. The enzyme catalyses guanosine(37) in tRNA + S-adenosyl-L-methionine = N(1)-methylguanosine(37) in tRNA + S-adenosyl-L-homocysteine + H(+). Its function is as follows. Specifically methylates guanosine-37 in various tRNAs. The protein is tRNA (guanine-N(1)-)-methyltransferase of Clostridium beijerinckii (strain ATCC 51743 / NCIMB 8052) (Clostridium acetobutylicum).